Here is a 69-residue protein sequence, read N- to C-terminus: Large ribosomal subunit protein bL31 (69 aa).

Positions 16, 18, 38, and 41 each coordinate Zn(2+).

Belongs to the bacterial ribosomal protein bL31 family. Type A subfamily. In terms of assembly, part of the 50S ribosomal subunit. It depends on Zn(2+) as a cofactor.

Functionally, binds the 23S rRNA. This Cutibacterium acnes (strain DSM 16379 / KPA171202) (Propionibacterium acnes) protein is Large ribosomal subunit protein bL31.